The following is a 182-amino-acid chain: Inosine/xanthosine triphosphatase (182 aa).

Mg(2+) contacts are provided by Asp38 and Glu68. Position 68-69 (68-69 (EA)) interacts with substrate.

The protein belongs to the YjjX NTPase family. In terms of assembly, homodimer. Mg(2+) serves as cofactor. The cofactor is Mn(2+).

The enzyme catalyses XTP + H2O = XDP + phosphate + H(+). It catalyses the reaction ITP + H2O = IDP + phosphate + H(+). Phosphatase that hydrolyzes non-canonical purine nucleotides such as XTP and ITP to their respective diphosphate derivatives. Probably excludes non-canonical purines from DNA/RNA precursor pool, thus preventing their incorporation into DNA/RNA and avoiding chromosomal lesions. The protein is Inosine/xanthosine triphosphatase of Erwinia tasmaniensis (strain DSM 17950 / CFBP 7177 / CIP 109463 / NCPPB 4357 / Et1/99).